The following is a 1859-amino-acid chain: U3 small nucleolar RNA-associated protein 10 (1859 aa).

A helical transmembrane segment spans residues 258–278; that stretch reads LGAYSVLAVLSAVAPLSIELL. Residues 578–616 form an HEAT 1 repeat; the sequence is VLPLLLIAFNDPSSHIRAAFAQLVQLVSEITKAIHENKK. Residues 1392–1412 traverse the membrane as a helical segment; that stretch reads IVIASISAIVSIVNVLGIKTL. Residues 1819-1857 form an HEAT 2 repeat; sequence LVPHIAELLEDDDEAVEIEVREGLVRVIEKVLGEPLDRY.

This sequence belongs to the HEATR1/UTP10 family. Component of the ribosomal small subunit (SSU) processome.

The protein localises to the nucleus. Its subcellular location is the nucleolus. The protein resides in the membrane. Its function is as follows. Involved in nucleolar processing of pre-18S ribosomal RNA. Involved in ribosome biosynthesis. This Lodderomyces elongisporus (strain ATCC 11503 / CBS 2605 / JCM 1781 / NBRC 1676 / NRRL YB-4239) (Yeast) protein is U3 small nucleolar RNA-associated protein 10.